The primary structure comprises 298 residues: ATP phosphoribosyltransferase (298 aa).

It belongs to the ATP phosphoribosyltransferase family. Long subfamily. The cofactor is Mg(2+).

Its subcellular location is the cytoplasm. The catalysed reaction is 1-(5-phospho-beta-D-ribosyl)-ATP + diphosphate = 5-phospho-alpha-D-ribose 1-diphosphate + ATP. It participates in amino-acid biosynthesis; L-histidine biosynthesis; L-histidine from 5-phospho-alpha-D-ribose 1-diphosphate: step 1/9. Feedback inhibited by histidine. Its function is as follows. Catalyzes the condensation of ATP and 5-phosphoribose 1-diphosphate to form N'-(5'-phosphoribosyl)-ATP (PR-ATP). Has a crucial role in the pathway because the rate of histidine biosynthesis seems to be controlled primarily by regulation of HisG enzymatic activity. This Vibrio vulnificus (strain CMCP6) protein is ATP phosphoribosyltransferase.